Reading from the N-terminus, the 335-residue chain is GTPase Obg (335 aa).

In terms of domain architecture, Obg spans 1–158 (MFVDQITLEL…RLVELELKLI (158 aa)). The OBG-type G domain maps to 159–334 (ADIGLVGFPN…LYDLFKSKLS (176 aa)). GTP contacts are provided by residues 165–172 (GFPNAGKS), 190–194 (FTTLH), 215–218 (DIPG), 285–288 (NKID), and 315–317 (SGL). Mg(2+) contacts are provided by Ser172 and Thr192.

The protein belongs to the TRAFAC class OBG-HflX-like GTPase superfamily. OBG GTPase family. In terms of assembly, monomer. Mg(2+) is required as a cofactor.

It localises to the cytoplasm. Functionally, an essential GTPase which binds GTP, GDP and possibly (p)ppGpp with moderate affinity, with high nucleotide exchange rates and a fairly low GTP hydrolysis rate. Plays a role in control of the cell cycle, stress response, ribosome biogenesis and in those bacteria that undergo differentiation, in morphogenesis control. This chain is GTPase Obg, found in Chlamydia trachomatis serovar A (strain ATCC VR-571B / DSM 19440 / HAR-13).